Reading from the N-terminus, the 177-residue chain is ATP synthase subunit delta (177 aa).

It belongs to the ATPase delta chain family. In terms of assembly, F-type ATPases have 2 components, F(1) - the catalytic core - and F(0) - the membrane proton channel. F(1) has five subunits: alpha(3), beta(3), gamma(1), delta(1), epsilon(1). F(0) has three main subunits: a(1), b(2) and c(10-14). The alpha and beta chains form an alternating ring which encloses part of the gamma chain. F(1) is attached to F(0) by a central stalk formed by the gamma and epsilon chains, while a peripheral stalk is formed by the delta and b chains.

It is found in the cell membrane. In terms of biological role, f(1)F(0) ATP synthase produces ATP from ADP in the presence of a proton or sodium gradient. F-type ATPases consist of two structural domains, F(1) containing the extramembraneous catalytic core and F(0) containing the membrane proton channel, linked together by a central stalk and a peripheral stalk. During catalysis, ATP synthesis in the catalytic domain of F(1) is coupled via a rotary mechanism of the central stalk subunits to proton translocation. Its function is as follows. This protein is part of the stalk that links CF(0) to CF(1). It either transmits conformational changes from CF(0) to CF(1) or is implicated in proton conduction. This is ATP synthase subunit delta from Carboxydothermus hydrogenoformans (strain ATCC BAA-161 / DSM 6008 / Z-2901).